Consider the following 146-residue polypeptide: UPF0756 membrane protein PTH_1817 (146 aa).

The next 4 helical transmembrane spans lie at Leu6–Ile26, Met46–Trp66, Ile69–Thr89, and Ile105–Val125.

Belongs to the UPF0756 family.

The protein localises to the cell membrane. This chain is UPF0756 membrane protein PTH_1817, found in Pelotomaculum thermopropionicum (strain DSM 13744 / JCM 10971 / SI).